A 304-amino-acid chain; its full sequence is Glutaminase (304 aa).

Residues S63, N114, E158, N165, Y189, Y240, and V258 each coordinate substrate.

It belongs to the glutaminase family. As to quaternary structure, homotetramer.

The catalysed reaction is L-glutamine + H2O = L-glutamate + NH4(+). This Shewanella baltica (strain OS223) protein is Glutaminase.